Reading from the N-terminus, the 1183-residue chain is LRR receptor-like serine/threonine-protein kinase FLS2 (1183 aa).

Positions 1–41 (MERNKFASKMSQHYTKTICIAVVLVAVLFSLSSAAAAGSGA) are cleaved as a signal peptide. Residues 42 to 809 (AVSVQLEALL…GKKRVFSRTG (768 aa)) lie on the Extracellular side of the membrane. Cysteines 87 and 94 form a disulfide. Asparagine 88 and asparagine 120 each carry an N-linked (GlcNAc...) asparagine glycan. 13 LRR repeats span residues 97-120 (AGQV…FLGN), 121-145 (ISTL…LGRL), 147-169 (ELEQ…LCNC), 171-193 (AMWA…IGDL), 194-217 (SNLE…MAKL), 218-241 (KGIM…IGDL), 242-265 (SNLQ…LGRC), 267-289 (NLTL…LGEL), 290-313 (TNLE…LRRC), 315-337 (SLLN…LGEL), 338-361 (PSLQ…LTNL), 363-385 (NLTI…IGSL), and 386-409 (RNLR…ISNC). A disulfide bond links cysteine 167 and cysteine 189. N-linked (GlcNAc...) asparagine glycans are attached at residues asparagine 168 and asparagine 181. The N-linked (GlcNAc...) asparagine glycan is linked to asparagine 267. 4 N-linked (GlcNAc...) asparagine glycosylation sites follow: asparagine 363, asparagine 395, asparagine 408, and asparagine 414. 14 LRR repeats span residues 433–457 (LQSL…LFDC), 459–480 (QLQK…LVGQ), 481–505 (LGNL…IGNM), 507–529 (KLIS…ISNM), 530–553 (SSLQ…VFEL), 555–577 (QLTI…VANL), 578–600 (RSLS…ALGR), 601–625 (LDQL…VIAS), 627–651 (SNVQ…IGGL), 652–675 (VMVQ…LAGC), 676–699 (KNLY…LFPQ), 701–724 (DLLT…IAAL), 725–748 (KHIQ…LANL), and 749–773 (TALR…VFRN). 3 N-linked (GlcNAc...) asparagine glycosylation sites follow: asparagine 483, asparagine 504, and asparagine 528. The N-linked (GlcNAc...) asparagine glycan is linked to asparagine 591. Residue asparagine 634 is glycosylated (N-linked (GlcNAc...) asparagine). Asparagine 707, asparagine 747, asparagine 755, and asparagine 773 each carry an N-linked (GlcNAc...) asparagine glycan. Residues 810 to 830 (LVILVVLIALSTLLLLMVATI) traverse the membrane as a helical segment. At 831 to 1183 (LLVSYRRYRR…LKMSKLVGED (353 aa)) the chain is on the cytoplasmic side. In terms of domain architecture, Protein kinase spans 876–1179 (FDQGNVIGSS…LSSLLKMSKL (304 aa)). ATP-binding positions include 882–890 (IGSSNLSTV) and lysine 908. Aspartate 1013 serves as the catalytic Proton acceptor.

This sequence belongs to the protein kinase superfamily. Ser/Thr protein kinase family. As to quaternary structure, interacts with SERK2.

Its subcellular location is the cell membrane. The enzyme catalyses L-seryl-[protein] + ATP = O-phospho-L-seryl-[protein] + ADP + H(+). It carries out the reaction L-threonyl-[protein] + ATP = O-phospho-L-threonyl-[protein] + ADP + H(+). In terms of biological role, constitutes the pattern-recognition receptor (PPR) that determines the specific perception of flagellin (flg22), a potent elicitor of the defense response to pathogen-associated molecular patterns (PAMPs). Recognizes flg22 from Pseudomonas aeruginosa and Acidovorax avenae. flg22 is a peptide derived from the bacterial flagellin N-terminus sequence. Does not recognize flg22 from Xanthomonas oryzae pv. oryzae (Xoo) or Xanthomonas oryzae pv. oryzicola (Xoc). This chain is LRR receptor-like serine/threonine-protein kinase FLS2, found in Oryza sativa subsp. japonica (Rice).